Reading from the N-terminus, the 100-residue chain is Urease subunit gamma (100 aa).

This sequence belongs to the urease gamma subunit family. As to quaternary structure, heterotrimer of UreA (gamma), UreB (beta) and UreC (alpha) subunits. Three heterotrimers associate to form the active enzyme.

Its subcellular location is the cytoplasm. It carries out the reaction urea + 2 H2O + H(+) = hydrogencarbonate + 2 NH4(+). Its pathway is nitrogen metabolism; urea degradation; CO(2) and NH(3) from urea (urease route): step 1/1. This Ralstonia nicotianae (strain ATCC BAA-1114 / GMI1000) (Ralstonia solanacearum) protein is Urease subunit gamma.